The primary structure comprises 345 residues: Dihydroorotate dehydrogenase (quinone) (345 aa).

FMN contacts are provided by residues Ala-65 to Lys-69 and Thr-89. Lys-69 serves as a coordination point for substrate. A substrate-binding site is contributed by Asn-114 to Phe-118. FMN is bound by residues Asn-142 and Asn-175. Asn-175 is a substrate binding site. The active-site Nucleophile is Ser-178. Position 180 (Asn-180) interacts with substrate. Residues Lys-220 and Thr-248 each contribute to the FMN site. Asn-249–Thr-250 contacts substrate. Residues Gly-271, Gly-300, and Tyr-321–Thr-322 each bind FMN.

This sequence belongs to the dihydroorotate dehydrogenase family. Type 2 subfamily. Monomer. FMN is required as a cofactor.

It is found in the cell membrane. The enzyme catalyses (S)-dihydroorotate + a quinone = orotate + a quinol. It participates in pyrimidine metabolism; UMP biosynthesis via de novo pathway; orotate from (S)-dihydroorotate (quinone route): step 1/1. In terms of biological role, catalyzes the conversion of dihydroorotate to orotate with quinone as electron acceptor. In Burkholderia ambifaria (strain ATCC BAA-244 / DSM 16087 / CCUG 44356 / LMG 19182 / AMMD) (Burkholderia cepacia (strain AMMD)), this protein is Dihydroorotate dehydrogenase (quinone).